The following is a 539-amino-acid chain: Trigger factor (539 aa).

The 90-residue stretch at 163–252 folds into the PPIase FKBP-type domain; it reads GDQLTVQIET…VLDVQERLLP (90 aa). Composition is skewed to low complexity over residues 434 to 447 and 475 to 484; these read SFEQAASPEAASEP and AASPEAASEP. The tract at residues 434 to 539 is disordered; it reads SFEQAASPEA…DVATPEARTE (106 aa). The segment covering 509 to 528 has biased composition (polar residues); the sequence is TETPIVSQEENGESVENQSV.

Belongs to the FKBP-type PPIase family. Tig subfamily.

The protein localises to the cytoplasm. It carries out the reaction [protein]-peptidylproline (omega=180) = [protein]-peptidylproline (omega=0). Functionally, involved in protein export. Acts as a chaperone by maintaining the newly synthesized protein in an open conformation. Functions as a peptidyl-prolyl cis-trans isomerase. This Roseiflexus sp. (strain RS-1) protein is Trigger factor.